Consider the following 154-residue polypeptide: UPF0756 membrane protein CKR_1028 (154 aa).

Transmembrane regions (helical) follow at residues 5-25, 48-68, 82-102, and 113-133; these read IILIIILTASVLGRANSVALA, NGLFLGLVILIASILIPIADG, WLGIFALLVSLFTTYLSGLGM, and IMPALILGAVIAAAFLGGVPV.

This sequence belongs to the UPF0756 family.

The protein resides in the cell membrane. This is UPF0756 membrane protein CKR_1028 from Clostridium kluyveri (strain NBRC 12016).